Here is an 87-residue protein sequence, read N- to C-terminus: MNSLLMITTCLVLFGTVWAKEGYLVSKSTGCKYECFWLGKNEGCDKECKAPNQGGGYGYCHAFACWCENLPESTPTYPIPGKSCGKK.

Residues 1 to 19 (MNSLLMITTCLVLFGTVWA) form the signal peptide. The 66-residue stretch at 20 to 85 (KEGYLVSKST…TYPIPGKSCG (66 aa)) folds into the LCN-type CS-alpha/beta domain. Cystine bridges form between cysteine 31/cysteine 84, cysteine 35/cysteine 60, cysteine 44/cysteine 65, and cysteine 48/cysteine 67. Cysteine 84 carries the post-translational modification Cysteine amide. A propeptide spanning residues 85-87 (GKK) is cleaved from the precursor.

The protein belongs to the long (4 C-C) scorpion toxin superfamily. Sodium channel inhibitor family. Beta subfamily. Expressed by the venom gland.

Its subcellular location is the secreted. In terms of biological role, beta toxins bind voltage-independently at site-4 of sodium channels (Nav) and shift the voltage of activation toward more negative potentials thereby affecting sodium channel activation and promoting spontaneous and repetitive firing. The polypeptide is Neurotoxin Cex1 (Centruroides exilicauda (Bark scorpion)).